Reading from the N-terminus, the 315-residue chain is Methylglutaconyl-CoA hydratase, mitochondrial (315 aa).

The transit peptide at 1-43 (MAAAAAPGALGALSAGRVRLVAACCARLGSAAWARGTAPRRGY) directs the protein to the mitochondrion. Lysine 76 carries the N6-acetyllysine; alternate modification. Lysine 76 carries the post-translational modification N6-succinyllysine; alternate. The interval 81-95 (KNLLKMLSKAVDALK) is RNA-binding. An N6-succinyllysine modification is found at lysine 85. Residues lysine 89 and lysine 120 each carry the N6-acetyllysine; alternate modification. N6-succinyllysine; alternate occurs at positions 89 and 120. N6-succinyllysine occurs at positions 124 and 136. Lysine 180 and lysine 187 each carry N6-acetyllysine; alternate. N6-succinyllysine; alternate occurs at positions 180 and 187. The residue at position 305 (lysine 305) is an N6-succinyllysine.

This sequence belongs to the enoyl-CoA hydratase/isomerase family. In terms of assembly, homohexamer.

It localises to the mitochondrion. The catalysed reaction is (3S)-3-hydroxy-3-methylglutaryl-CoA = 3-methyl-(2E)-glutaconyl-CoA + H2O. It carries out the reaction (3S)-citramalyl-CoA = itaconyl-CoA + H2O. The enzyme catalyses 3-hydroxyisovaleryl-CoA = 3-methylbut-2-enoyl-CoA + H2O. It catalyses the reaction (S)-3-hydroxyglutaryl-CoA = (2E)-glutaconyl-CoA + H2O. The protein operates within amino-acid degradation; L-leucine degradation; (S)-3-hydroxy-3-methylglutaryl-CoA from 3-isovaleryl-CoA: step 3/3. Its function is as follows. Catalyzes the fifth step in the leucine degradation pathway, the reversible hydration of 3-methylglutaconyl-CoA (3-MG-CoA) to 3-hydroxy-3-methylglutaryl-CoA (HMG-CoA). Can catalyze the reverse reaction but at a much lower rate in vitro. HMG-CoA is then quickly degraded by another enzyme (such as HMG-CoA lyase) to give acetyl-CoA and acetoacetate. Uses other substrates such as (2E)-glutaconyl-CoA efficiently in vitro, and to a lesser extent 3-methylcrotonyl-CoA (3-methyl-(2E)-butenoyl-CoA), crotonyl-CoA ((2E)-butenoyl-CoA) and 3-hydroxybutanoyl-CoA (the missing carboxylate reduces affinity to the active site). Originally it was identified as an RNA-binding protein as it binds to AU-rich elements (AREs) in vitro. AREs direct rapid RNA degradation and mRNA deadenylation. Might have itaconyl-CoA hydratase activity, converting itaconyl-CoA into citramalyl-CoA in the C5-dicarboxylate catabolism pathway. The C5-dicarboxylate catabolism pathway is required to detoxify itaconate, an antimicrobial metabolite and immunomodulator produced by macrophages during certain infections, that can act as a vitamin B12-poisoning metabolite. The sequence is that of Methylglutaconyl-CoA hydratase, mitochondrial from Rattus norvegicus (Rat).